Here is a 432-residue protein sequence, read N- to C-terminus: Killer cell immunoglobulin-like receptor 3DL1 (432 aa).

The N-terminal stretch at 1 to 21 is a signal peptide; that stretch reads MLLWFLSLVCSGFFLVQRMSA. The Extracellular portion of the chain corresponds to 22–335; it reads HVGSHDKPFL…ADTKTNNYKN (314 aa). 3 Ig-like C2-type domains span residues 42–100, 135–202, and 238–301; these read GQNV…HPQY, GGNV…NSYY, and GETM…FRNA. An N-linked (GlcNAc...) asparagine glycan is attached at asparagine 44. A disulfide bridge connects residues cysteine 49 and cysteine 95. An N-linked (GlcNAc...) asparagine glycan is attached at asparagine 137. Intrachain disulfides connect cysteine 142-cysteine 195 and cysteine 245-cysteine 294. A glycan (N-linked (GlcNAc...) asparagine) is linked at asparagine 300. A helical membrane pass occupies residues 336-356; that stretch reads LHILTGLLVTMVLVVIIIFYS. Residues 357-432 lie on the Cytoplasmic side of the membrane; that stretch reads CYFSKQNKSQ…DTIVYMEIMK (76 aa).

It belongs to the immunoglobulin superfamily.

The protein resides in the cell membrane. Functionally, receptor on natural killer (NK) cells. Inhibits the activity of NK cells thus preventing cell lysis. In Mus musculus (Mouse), this protein is Killer cell immunoglobulin-like receptor 3DL1 (Kir3dl1).